Consider the following 314-residue polypeptide: MMRTIKVGSRRSKLAMTQTKWVIQKLKEINPSFAFEIKEIVTKGDRIVDVTLSKVGGKGLFVKEIEQALLNEEIDMAVHSMKDMPAVLPEGLVIGCIPEREDPRDALISKNRVKLSEMKKGAVIGTSSLRRSAQLLIERPDLTIKWIRGNIDTRLQKLETEDYDAIILAAAGLSRMGWKQDVVTEFLEPERCLPAVGQGALAIECRESDEELLALFSQFTDEYTKRTVLAERAFLNAMEGGCQVPIAGYSVLNGQDEIEMTGLVASPDGKIIFKETVTGNDPEEVGKRCAALMADKGAKDLIDRVKRELDEDGK.

S-(dipyrrolylmethanemethyl)cysteine is present on Cys242.

It belongs to the HMBS family. Monomer. Dipyrromethane serves as cofactor.

The catalysed reaction is 4 porphobilinogen + H2O = hydroxymethylbilane + 4 NH4(+). Its pathway is porphyrin-containing compound metabolism; protoporphyrin-IX biosynthesis; coproporphyrinogen-III from 5-aminolevulinate: step 2/4. In terms of biological role, tetrapolymerization of the monopyrrole PBG into the hydroxymethylbilane pre-uroporphyrinogen in several discrete steps. The sequence is that of Porphobilinogen deaminase (hemC) from Bacillus subtilis (strain 168).